The following is a 522-amino-acid chain: Peptide chain release factor 3 (522 aa).

Positions 10 to 277 constitute a tr-type G domain; sequence ASRKTFAIIS…TFVDFAPSPS (268 aa). Residues 19 to 26, 87 to 91, and 141 to 144 contribute to the GTP site; these read SHPDAGKT, DTPGH, and NKMD.

The protein belongs to the TRAFAC class translation factor GTPase superfamily. Classic translation factor GTPase family. PrfC subfamily.

It localises to the cytoplasm. Functionally, increases the formation of ribosomal termination complexes and stimulates activities of RF-1 and RF-2. It binds guanine nucleotides and has strong preference for UGA stop codons. It may interact directly with the ribosome. The stimulation of RF-1 and RF-2 is significantly reduced by GTP and GDP, but not by GMP. This is Peptide chain release factor 3 from Listeria monocytogenes serotype 4b (strain F2365).